The chain runs to 88 residues: Small ribosomal subunit protein bS20 (88 aa).

Residues 1 to 12 (MANHKSALKRAK) are compositionally biased toward basic residues. A disordered region spans residues 1–23 (MANHKSALKRAKQNTIKQMRNRS).

It belongs to the bacterial ribosomal protein bS20 family.

In terms of biological role, binds directly to 16S ribosomal RNA. This Desulfatibacillum aliphaticivorans protein is Small ribosomal subunit protein bS20.